The sequence spans 386 residues: N-acetylneuraminate epimerase (386 aa).

Residues 1-29 (MGMQMKNSKKMMTLMALCLSVAITTSGYA) form the signal peptide. 7 Kelch repeats span residues 51–95 (VIYV…VFLN), 97–149 (ELYV…VKLN), 151–186 (TMAL…RVIY), 187–232 (NYFN…AMEN), 235–284 (LTLI…LAGA), 306–355 (QNYT…NYGD), and 357–386 (IFLI…LLIE). Catalysis depends on Glu241, which acts as the Proton acceptor.

This sequence belongs to the NanM family. Homodimer.

It localises to the periplasm. It carries out the reaction N-acetyl-alpha-neuraminate = N-acetyl-beta-neuraminate. Functionally, converts alpha-N-acetylneuranimic acid (Neu5Ac) to the beta-anomer, accelerating the equilibrium between the alpha- and beta-anomers. Probably facilitates sialidase-negative bacteria to compete successfully for limited amounts of extracellular Neu5Ac, which is likely taken up in the beta-anomer. In addition, the rapid removal of sialic acid from solution might be advantageous to the bacterium to damp down host responses. The sequence is that of N-acetylneuraminate epimerase from Salmonella arizonae (strain ATCC BAA-731 / CDC346-86 / RSK2980).